The chain runs to 185 residues: Ribosome-recycling factor (185 aa).

Belongs to the RRF family.

It localises to the cytoplasm. Responsible for the release of ribosomes from messenger RNA at the termination of protein biosynthesis. May increase the efficiency of translation by recycling ribosomes from one round of translation to another. In Serratia proteamaculans (strain 568), this protein is Ribosome-recycling factor.